A 78-amino-acid polypeptide reads, in one-letter code: Large ribosomal subunit protein bL28 (78 aa).

The protein belongs to the bacterial ribosomal protein bL28 family.

This Psychrobacter sp. (strain PRwf-1) protein is Large ribosomal subunit protein bL28.